A 5251-amino-acid polypeptide reads, in one-letter code: MTKFSEGHYDILNLIEVKSNIQEKNILGYSIDYTVGGLFLFGGFKIDIEENNGIICNDAYLIHIKNDKAEYETLSIKIKPSIRCYHNSCTLLENYVIIFGGLNSEVPFVALNDLWVFNSLNKTFVEIKLKCKEKNKEKNLQNGINGTNEKGYISQTDDENCSDNKYGENQDYGSNDSDSKDGEDIDKDDSILDNSYVKNLRKYLKSNKSDELHSSDIPCPRYFSSLDLYIIRKNNIEEEKGFKKDEIKIIKNNIIVSNSLNYEYFSLILFGGYGGYDRSSYNDLYEFNILNNEWILRGCKGNVPSTRYGHISFIHGNNLFILGGTNAEISFNDMYSCDLKNNEWSEVDFSYSFNISKVFCRSVLVESIDRNIIFIFGGYNIISDEKGNRKIEYNNIELNMLKLYDTFKLEELKYNIIQNNEENIIKNNNMEEINNMNSNNVKNEIISTKHDIYEDSNISNNITFCSITYDFMDSNLIITDNKKKIYIMNISNIIGPKYAIFNIWPKQCDINGNKKLLFRGKGFTNEGKILVKYKSDDINLYSEGIYINENNIYTIVPNAKNKIKNNICQVQLSINDKCYTTNSCFLEYYYNIDPKNTLIFGSGLLEPVCLQKDNIFFLIAKNSLNEHKKIGGDKFQISIIYEQKSEQYDIKYFVYDLNNGFYIVKYFSFLNDKQMKVKMQNVGKNNNIEQRNNNNDNNDNNNNDNNNNNNNDNNNNNNNNNNNNNNNNDNLNEQLNCNVVQRKNQNDLETLEGPQNISNKNSMNNEDIKSNTNNHMEILDLNGTLKITVKLKDENIQNSPFFLKVDNNLKDKIIYVKQFINDRLENLLRKGECLFDLIKNKNMNTNNLIQLNINIDHFLNTFPKAIHDINIIEQYILYGLIDIDKIKNVITNLHEEDNLVNASQEEEIYIDKEIHELINNEKFKNDQTDEMGEYTATTTNNVKHTNNTNNNDTHITDTLTHINENNDTRNNFLKVKDNHKIVDFINENKLKFLDYIDPNIMKKLRNYINLLNTEELNLKNKKDNKKIDDSNKKDLLGIKKKRSEDKFHLDNNLEKDEKKIEVIKNLLIFYHKLKTVCLSKKEKELKDEFIKEEKESIKKLKLNYNKFVNIKKNLEVSNVYLHNNGYDSSLKELETTKKYLIEIKDEVTKIKQISDNIIKIDNVEELNKDIENLNNEIHEIEKMWLFIKKKEEILNEFFFCPFKDLDVEDFDIQIKKLQNDFKKIKVDRKHNICKEETLKLKEIIKFISVLCEIKKPFIKDRHIKEMENNINEEKEKNKEEDKINIIIDDSTLTIYFYKLNIMKYHDTIEEVIIKAYNEKIIEETINKFEDYWDKIYFKKKEYKNNILLTYIDDICIDTIEEHQVTLQNCFSSKYFLFFSDELNLWQKKISNIYEVIQLLKDIEKLWIYLQNMYIYSEEVKKELPLYSKFFLTINDEYLEMLKQIIDNNIKVVDFSNEGGIIEKLEELKVKLCKSEKPLNEYLDSKRKSFPRFFFISSTDLIDILSNGNNFKLVNTHVQKIFLSIRKFVTKNEQLTDNEIQNEVKLNNQETITEEKNKNANENSNEIETNKYNKKEELTNNRDGDGDDDDNIKNDKDEKDEKEETIIKLISSYGEEICNFHEGLVLKGKVECYLNDIIDHIKYTLKYYITNLFRLKDLFNNEKEKWIDENYLAQVFILCNTIFFVNDVENILIKKDINIYEELNKYYKNHILQLENVIKKVQKKLTIKNRIKIMCIITLDTFYRDVLEVILKNKSSISINMFDWQSQIRMYPFFKNQKIYEQNENQTEESNLKLDNKNLDNEHQEGKQEYNNKNNDNDNNNNNNNNNILNNELSKYTCLTHFKDLYIKIKIMDCSFNYSYDYIGNYQRLVITPLTSRIYITATQALSLYMGCAPAGPAGTGKTETTKDLSSFFGKNCYVFNCSDQLDYKSMGNIFKGIGSTGCWCCFDEFNRLIPEVLSVCSIQFKSILDCKRNNNNVCIIGSDEIIVKKNCAVFITMNPDYLGRSKLPESLKILFRPITVIIPDFNKICENMLMAEGYVNAKYLSIKFTTFFELAKSLLKDKHCDWGLRSIKSVLTKAGDLKRNYPDVDENKLLYSAIHDINIAKISSSNCPIFSGLLNDIFFSNQNDITDINDINDINENKKEKDNIEELKSDNVKEEKKTKKKHLEDNNNNKKKELFNLNNIEKELMDICKKNHLFGLNYFVKKIIQLNDIMNIRHCVFIMGEAGCGKTTLFNMLMEYQKKQNLKTVSIRINPKSINIDDLYGNVHIKTREWKDGVFSKYMRNYSKKDDCDKAYIIFDGNLDSHWIENMNSVMDDNKVLTLSSNERILLKNHMNLVFEFSDLMFATPATISRAGLVYFSVDPNDLWKNYFLSWIDKHDNFNSNIKKLFEKLMYKYVEPTFSYLSTLQTSIKISPMSHIQSLSALLDILLIDNNYESVEHYFIYSVIWCFGGFLGEKDNVNYKKSFDKYWKNTFKSIKVNRKISVFDFYVENNKFKEWDEAEITNELKQNYVLQDDIFIETIESYSYKYICKLFLKSDMPILFIGKTGVGKTQLCKKILNEEKEEFKSFYMIFNYYTTSKNVQTLMQSCLEKKSGKQFSPPYQQKLIYFIDDINMPKCDDYNTQSAIELLCQYIDTNSWFDLEKLNLIKILNTKLISCMNYNRGNFTINPRLIRHFFILNINFPENNTVNSIFSVLLKNHFNNFKQDVSDLIPSILKSTISLFYNIEKTFKRTATYFYYEFNLRDIHSIVKGLLTTTPVTFQDCDKLLFLWLHECERVYSDKLNKKDKNKYKKIITDIIKKMYNKYEINKFVMKYDSTLLFSNFHKGSHDKTYDICKNMEELTLFLNEELNEYNNSYNVNIVLFSDAIKHICKLIRIVDNLKAHALLLGIGGCGKTTISKFSSYISSKTFFEMDFSAHCTDNDIKKYLQNIFHKCAMKNEDIVLFLKESKIHDTFFIYVNEYMCSNNIIDLYTKEERDYIIHNIRNIAKADGIEQSDNNIFDYYIKKVNDNLHFILCFSPTSNNFRDKSNNFQCILNNTMIDIYDNWEADSLMCVGKNYVSNIYMNINTGDILLDQEYINLKNKNIEKDITLGNKQIEKNYIPTISTNDGDDHYKDMDKTNMKNGDITTTINNIPIDNNNNNNNNRDNIDGNNFFKNREGNDENMKRKVYSNNFTNQNDLNTNITNNNNNNSNNNNNNIYDKNDSILKEEEYVNLKDIITEYLKECYEDLLDISSFYYSHERSHIYITPKLYLESIKTYHIMLLKNITNINNKMNMLKNGITKMNETSSNVENIKNCLKDKKKISEEKMEAAEKYAIDIGNEKMVVKKESDLADIEEQNCLEIQKKVLKQQEECENDIRLGIPLIEQAEEALNTLNKKNIQELKTLNKPPPGVEDITAAVMQLLATIDTTISIDKFGKIKDRSWKSAQKMMINPEKFISLLKDYKNKIDENLVPDCNFKYVENLINLPHFNKNAIQKKSKAAAGLAEWVLNITSFYKIIQNILPKRILLDNTKKGLEEANEKLQIVREKVQSLKAKLSELISQYDHAIYERDLVILEEKKLKTKLELSIRLIDALSSEEISWSKQYESLKKKKKTILTDILLSSTFVTFCGGFTKKYRNKIMTNCVDTLKRKNEIQNNIFNNMLKKINNNDQNFINNNNNNNSSNNNSTNFGYNEDPQKKDNHNNFDISNKLNIKNEKKDNELGNDNLKKEEMIYDIFLVNNFNLDLLINEEVLSKLSKQGLTLNSVCIENNIILENSDKFPIIIDPQMESLKWLINSHKEKSEKLIITDINDKILLKKIEECISFGYSIIVENADEYIDNTLYNVISKNIIKRKNNYYININDKELMFHPSFYIILHTQLSNPHYQPEIQSACSLINFTVTPDDLEEHLLSITLENEFNHLSKKKKKLSLLKYDYMCQLSFLQSSILQKLTDAKGDILEDVSLIENLEKTKLLSENIAKKTEIVKNTEVHINTIINLYRPLSKRGVMYFFILQKLKNLHSFYFYSLEIFLKIFIKCLNDSSPNRSPSKVNQEQEYYLKSEDNDFNDDYLGSTKEEEKMEDEEKMEEEKVDEEKMEEEKVDEEKMEDEKVEEKMEEEKVVEENTEDEKAIEINTEDEKAVEKNTEDEKAVEKNTEDEKAIEKNTEDEKAVEKNTEDEKAVEKNTEDEKAIEKNTEDEKAVEKNTEDEKAVEQNTEDEKVVEENTEDEKAVEKNTEDEKAVEKNTEDEKVVEEKIEDEKGEEQKAEEENVGIEEVEKVQIDDYKVSEKKGENKNCTYEENGKIDKDKEDDLEEEEDFENDDFTNEETKIDKNEVEKRVNMLTDLLNIKMWMYMDKGLLERDKLIVKCLIMLHLEKLNDKISEEEEEIFINPKYKLSNNNITSIRNKKENESMEKKLMNKSFINEELYEDCKNLENLKDFENITESFESESMSWKQWFLSEKVENEELPRKYNNIKDFSKLLLIRVLRKDRFLIALKNYITKNIKMTNDEKNNTYALENILDEYIDNKTPVLFLLTTGYDPSKEIEDYINKMKNNAIKKNDSNKKESNKNNIAYVNISMGQGQENIALKYLKEISKCGGYIFLQNIHLMTKWLKEFEEILDKIFLDAHVNFRLFLSAAIPNEKDTKLLPEKLLKKCFRINNEKSYSLKDNIKCCLDKFENGQYDDKLKTVILGLSYYHSLLLGRFLYGKIGFSQSYSFNDNDLEISFNIIKRYLKTYESFPLADVLFLIGEIIYGGHITDIWDRRINKTYVKNILKEIYRNIISINEKNKNINMDFHHPNDSNNNYNDDDNNNSHKNNKNNNNNNNKDDDDESNNSNDNEEENEEKLILKNTKHNILFDVFKFPDCSKYNINQLKKYIDEKLNKEQTYLLGLHINAEIEYMKNECSRILQTLQELSNKEIASTESYKKNTKIIKKEKPGDNKDNKYTHDQKKETIHKEEDDEDEKHSGSNKSTKIIYDIINHLLNELPDKIDTNDLKIEDSQTNTFMVIALKEAEKFNKLIECINDTLIEIKLVLDGILNMNDKIQNTIKSLMLHNIPHIWINYSYPSKKKLMPWFENFKLRIIFIKEWISKIRNNIFLPNSVWLSALFNPISFLTAIKQKFAQENKVPIDKLKLKWQVTNITKLEDLNNKNNALYIHGLYLQGASWFINSKNDTFTFDKDNINDNVSYGNIIESVPKHIYYSMPLIYVYCISNEQDELLKENMEYRSLDTPLYVTSDRGNTFVCSIDLNLEMEDIEDKWILAGVALFLSDD.

Kelch repeat units lie at residues 37–87 (GLFL…CYHN), 95–143 (YVII…LQNG), 266–317 (SLIL…IHGN), 318–367 (NLFI…LVES), and 372–421 (IIFI…QNNE). Positions 140–188 (LQNGINGTNEKGYISQTDDENCSDNKYGENQDYGSNDSDSKDGEDIDKD) are disordered. Positions 686 to 732 (NNIEQRNNNNDNNDNNNNDNNNNNNNDNNNNNNNNNNNNNNNNDNLN) are disordered. The segment covering 692 to 730 (NNNNDNNDNNNNDNNNNNNNDNNNNNNNNNNNNNNNNDN) has biased composition (low complexity). 2 coiled-coil regions span residues 1155–1225 (DNII…KKIK) and 1544–1610 (KLNN…KLIS). Positions 1554-1598 (EKNKNANENSNEIETNKYNKKEELTNNRDGDGDDDDNIKNDKDEK) are disordered. Over residues 1567-1583 (ETNKYNKKEELTNNRDG) the composition is skewed to basic and acidic residues. A Kelch 6 repeat occupies 1639–1685 (HIKYTLKYYITNLFRLKDLFNNEKEKWIDENYLAQVFILCNTIFFVN). The segment at 1802–1825 (HQEGKQEYNNKNNDNDNNNNNNNN) is disordered. A compositionally biased stretch (low complexity) spans 1810-1825 (NNKNNDNDNNNNNNNN). 1895 to 1902 (GPAGTGKT) provides a ligand contact to ATP. The stretch at 2136 to 2188 (NDINENKKEKDNIEELKSDNVKEEKKTKKKHLEDNNNNKKKELFNLNNIEKEL) forms a coiled coil. The interval 2152–2171 (KSDNVKEEKKTKKKHLEDNN) is disordered. Residue 2224–2231 (GEAGCGKT) coordinates ATP. The stretch at 2447–2494 (VIWCFGGFLGEKDNVNYKKSFDKYWKNTFKSIKVNRKISVFDFYVENN) is one Kelch 7 repeat. ATP contacts are provided by residues 2546–2553 (GKTGVGKT) and 2890–2897 (GIGGCGKT). 2 stretches are compositionally biased toward low complexity: residues 3138–3154 (DNNNNNNNNRDNIDGNN) and 3652–3671 (DQNFINNNNNNNSSNNNSTN). Disordered stretches follow at residues 3138–3163 (DNNNNNNNNRDNIDGNNFFKNREGND), 3652–3686 (DQNFINNNNNNNSSNNNSTNFGYNEDPQKKDNHNN), 4042–4250 (EDND…EENV), 4280–4299 (NGKIDKDKEDDLEEEEDFEN), 4773–4824 (MDFH…ENEE), and 4910–4948 (KIIKKEKPGDNKDNKYTHDQKKETIHKEEDDEDEKHSGS). The span at 4059 to 4086 (KMEDEEKMEEEKVDEEKMEEEKVDEEKM) shows a compositional bias: acidic residues. Residues 4087 to 4247 (EDEKVEEKME…EKGEEQKAEE (161 aa)) are compositionally biased toward basic and acidic residues. 2 stretches are compositionally biased toward acidic residues: residues 4289–4299 (DDLEEEEDFEN) and 4807–4823 (DDDDESNNSNDNEEENE). Residues 4912-4937 (IKKEKPGDNKDNKYTHDQKKETIHKE) are compositionally biased toward basic and acidic residues.

Belongs to the dynein heavy chain family. Consists of at least two heavy chains and a number of intermediate and light chains.

It is found in the cytoplasm. Its subcellular location is the cytoskeleton. Its function is as follows. Acts as a motor for the intracellular retrograde motility of vesicles and organelles along microtubules. Dynein has ATPase activity; the force-producing power stroke is thought to occur on release of ADP. The protein is Dynein heavy chain-like protein 2 of Plasmodium falciparum (isolate 3D7).